The primary structure comprises 287 residues: ATP synthase gamma chain (287 aa).

Belongs to the ATPase gamma chain family. F-type ATPases have 2 components, CF(1) - the catalytic core - and CF(0) - the membrane proton channel. CF(1) has five subunits: alpha(3), beta(3), gamma(1), delta(1), epsilon(1). CF(0) has three main subunits: a, b and c.

The protein resides in the cell inner membrane. Functionally, produces ATP from ADP in the presence of a proton gradient across the membrane. The gamma chain is believed to be important in regulating ATPase activity and the flow of protons through the CF(0) complex. This is ATP synthase gamma chain from Stenotrophomonas maltophilia (strain K279a).